Here is a 376-residue protein sequence, read N- to C-terminus: Formate dehydrogenase 1 (376 aa).

Substrate is bound by residues valine 97 and asparagine 121. NAD(+)-binding positions include 176 to 177 (RI), aspartate 197, 244 to 248 (PLHKD), threonine 270, aspartate 296, and 325 to 328 (HISG).

It belongs to the D-isomer specific 2-hydroxyacid dehydrogenase family. FDH subfamily. Homodimer.

It is found in the cytoplasm. The catalysed reaction is formate + NAD(+) = CO2 + NADH. Catalyzes the NAD(+)-dependent oxidation of formate to carbon dioxide. Formate oxidation is the final step in the methanol oxidation pathway in methylotrophic microorganisms. Has a role in the detoxification of exogenous formate in non-methylotrophic organisms. The chain is Formate dehydrogenase 1 (FDH1) from Saccharomyces cerevisiae (strain YJM789) (Baker's yeast).